The following is a 432-amino-acid chain: Aspartate aminotransferase (432 aa).

45-46 (RG) serves as a coordination point for substrate. 109–111 (SSL) is a pyridoxal 5'-phosphate binding site. Residue 148–150 (YDR) coordinates substrate. Residues Asn-197, Tyr-229, and 262–265 (STSK) each bind pyridoxal 5'-phosphate. Arg-400 serves as a coordination point for substrate.

The protein belongs to the class-I pyridoxal-phosphate-dependent aminotransferase family. As to quaternary structure, homodimer. Pyridoxal 5'-phosphate serves as cofactor.

It carries out the reaction L-aspartate + 2-oxoglutarate = oxaloacetate + L-glutamate. This chain is Aspartate aminotransferase, found in Corynebacterium glutamicum (strain ATCC 13032 / DSM 20300 / JCM 1318 / BCRC 11384 / CCUG 27702 / LMG 3730 / NBRC 12168 / NCIMB 10025 / NRRL B-2784 / 534).